Consider the following 237-residue polypeptide: Pyrimidine 5'-nucleotidase PynA (237 aa).

Asp9 serves as the catalytic Nucleophile. The Mg(2+) site is built by Asp9, Asp11, and Asp181. Residue Asp11 is the Proton donor of the active site.

This sequence belongs to the HAD-like hydrolase superfamily. YjjG family. In terms of assembly, homodimer. Mg(2+) is required as a cofactor. The cofactor is Mn(2+).

The protein localises to the cytoplasm. It carries out the reaction a ribonucleoside 5'-phosphate + H2O = a ribonucleoside + phosphate. Functionally, nucleotidase that shows high phosphatase activity toward non-canonical pyrimidine nucleotides and three canonical nucleoside 5'-monophosphates (UMP, dUMP and dTMP), and no activity against IMP, UDP, GMP, AMP, UTP or pNPP. Appears to function as a house-cleaning nucleotidase in vivo, since the general nucleotidase activity of it allows it to protect cells against non-canonical pyrimidine derivatives such as 5-fluoro-2'-deoxyuridine monophosphate (5-FdUMP), and prevents the incorporation of potentially mutagenic nucleotides such as 5-bromo-2'-deoxyuridine (5-BrdU) into DNA. Is strictly specific to pyrimidine substrates with 5'-monophosphates and shows no activity against nucleoside di- and triphosphates. In Streptococcus pneumoniae (strain ATCC BAA-255 / R6), this protein is Pyrimidine 5'-nucleotidase PynA.